A 690-amino-acid chain; its full sequence is MARDFPLERVRNIGIAAHIDAGKTTTTERILFYSGVVHKIGEVHDGAAVTDWMAQERERGITITAAAISTSWQDHRINIIDTPGHVDFTIEVERSMRVLDGVIAVFCAVGGVQPQSETVWRQADRYSVPRMVFVNKMDRTGADFLKVHGQIKDRLKANAVPIQLPIGAEGDLSGIIDLVGNKAYIYKNDLGTDIEEAEIPAEMADEAAEWRATLMETIAETDEALIEKFLETGELSTEELKKGIREGVLKHGLVPMLCGSAFKNKGVQLVLDAVIDYLPAPVDVPPIQGVLPDGKEAVRPSDDKAPFSALAFKVMADPYGKLTFVRMYSGILEKGSYVLNSTKGEKERISRLVVLKADDREEVDALRAGDLGAVLGLKNTTTGDTLCTQDDPIVLETLFIPEPVISVAVEPKTKGDMEKLSKALVSLAEEDPTFRVNTDSETGQTVIAGMGELHLEILVDRMLREFKVEANIGAPQVSYRETIRGSAGGEGKFSRQTGGKGQYGHVVIEMEPGEPGSGFEFVNKIVGGIVPKEYIKPAEQGMRETCESGVIAGYPLIDVRCTLVHGSYHDVDSSEMAFKIAGSMAFKDGVKKCNPVLLEPMMKVEVEVPEDFLGSIIGDLSSRRGQVEGQGVEDGTSKISAKVPLAEMFGYATELRSMTQGRGIFSMEFDNYAEVPRNVAEAIISKNQGN.

The tr-type G domain occupies 8–282 (ERVRNIGIAA…AVIDYLPAPV (275 aa)). GTP contacts are provided by residues 17–24 (AHIDAGKT), 81–85 (DTPGH), and 135–138 (NKMD).

The protein belongs to the TRAFAC class translation factor GTPase superfamily. Classic translation factor GTPase family. EF-G/EF-2 subfamily.

The protein resides in the cytoplasm. Functionally, catalyzes the GTP-dependent ribosomal translocation step during translation elongation. During this step, the ribosome changes from the pre-translocational (PRE) to the post-translocational (POST) state as the newly formed A-site-bound peptidyl-tRNA and P-site-bound deacylated tRNA move to the P and E sites, respectively. Catalyzes the coordinated movement of the two tRNA molecules, the mRNA and conformational changes in the ribosome. The chain is Elongation factor G from Parasynechococcus marenigrum (strain WH8102).